Consider the following 104-residue polypeptide: UPF0045 protein YqgV (104 aa).

The protein belongs to the UPF0045 family.

The sequence is that of UPF0045 protein YqgV (yqgV) from Bacillus subtilis (strain 168).